We begin with the raw amino-acid sequence, 121 residues long: Large ribosomal subunit protein bL12 (121 aa).

Belongs to the bacterial ribosomal protein bL12 family. In terms of assembly, homodimer. Part of the ribosomal stalk of the 50S ribosomal subunit. Forms a multimeric L10(L12)X complex, where L10 forms an elongated spine to which 2 to 4 L12 dimers bind in a sequential fashion. Binds GTP-bound translation factors.

In terms of biological role, forms part of the ribosomal stalk which helps the ribosome interact with GTP-bound translation factors. Is thus essential for accurate translation. The polypeptide is Large ribosomal subunit protein bL12 (Pseudomonas putida (strain GB-1)).